The primary structure comprises 84 residues: Small ribosomal subunit protein bS20 (84 aa).

It belongs to the bacterial ribosomal protein bS20 family.

In terms of biological role, binds directly to 16S ribosomal RNA. The protein is Small ribosomal subunit protein bS20 of Parabacteroides distasonis (strain ATCC 8503 / DSM 20701 / CIP 104284 / JCM 5825 / NCTC 11152).